Consider the following 1411-residue polypeptide: Zinc finger protein 609 (1411 aa).

Disordered regions lie at residues 1–26, 47–190, 353–484, 517–659, 679–963, 1005–1125, 1153–1221, and 1270–1367; these read MSLSSGASGGKGVDANPVETYDSGDE, QKLE…QPVP, PRFC…EPTV, AHAH…ARPI, ASPG…VIQQ, YEEQ…RQAE, KSED…LTQH, and GSKV…STHH. A phosphoserine mark is found at Ser358, Ser361, and Ser379. The span at 377-401 shows a compositional bias: polar residues; it reads PNSNTPVNETATASDSKGTSNSSKT. The residue at position 381 (Thr381) is a Phosphothreonine. Ser413, Ser433, Ser446, Ser452, Ser467, and Ser470 each carry phosphoserine. Positions 423 to 437 are enriched in polar residues; it reads ASSTSEDVKASPSSA. Lys479 is covalently cross-linked (Glycyl lysine isopeptide (Lys-Gly) (interchain with G-Cter in SUMO2)). The segment at 495–520 adopts a C2H2-type zinc-finger fold; sequence IDCPHPNCNKKYKHINGLKYHQAHAH. Residues 519-529 are compositionally biased toward basic and acidic residues; sequence AHTDDDSKPEA. At Ser533 the chain carries Phosphoserine. Residues 549–563 are compositionally biased toward polar residues; that stretch reads NGASVSQKGSLSPAR. Residues Ser576 and Ser578 each carry the phosphoserine modification. The segment covering 626-649 has biased composition (basic and acidic residues); the sequence is SLERKCMEKEKCKKPSSLKPEKIP. The span at 679-700 shows a compositional bias: polar residues; it reads ASPGSSSGLTATVAQAMPNSPQ. Positions 726 to 736 are enriched in basic residues; sequence DKKKKDKKKKE. Ser743 is modified (phosphoserine). At Thr746 the chain carries Phosphothreonine. Basic and acidic residues predominate over residues 751–764; that stretch reads CRAEEGKSPFRESS. Ser758 carries the post-translational modification Phosphoserine. Lys789 participates in a covalent cross-link: Glycyl lysine isopeptide (Lys-Gly) (interchain with G-Cter in SUMO2). The span at 798–844 shows a compositional bias: polar residues; sequence FTDNAPSPSIGGSSRLENTTPTQPLTPLHVVTQNGAEASSVKTNSPA. Residue Ser804 is modified to Phosphoserine. Thr823 carries the post-translational modification Phosphothreonine. Ser842, Ser846, and Ser849 each carry phosphoserine. The segment covering 855–876 has biased composition (basic and acidic residues); it reads GEGKVDSVKSKDAEQLVKEGAK. Low complexity predominate over residues 897-908; the sequence is SYYSPSYAQSSP. A compositionally biased stretch (basic and acidic residues) spans 926 to 950; sequence TKRDEEPESIEGKVKNDICEEKKPE. Over residues 952–963 the composition is skewed to low complexity; that stretch reads SSSSQQPSVIQQ. The segment covering 1020-1042 has biased composition (basic and acidic residues); that stretch reads GVDKKAEMGLKEREAALKEEWKQ. Phosphoserine is present on Ser1055. Lys1061 participates in a covalent cross-link: Glycyl lysine isopeptide (Lys-Gly) (interchain with G-Cter in SUMO2). 3 stretches are compositionally biased toward basic and acidic residues: residues 1097-1113, 1153-1187, and 1195-1208; these read LKVKLSDASHLSKEASE, KSEDERWKEERDRKLKEERSRSKDSVPKEDGKEST, and TSEESRLGSKEPRP. Residue Lys1153 forms a Glycyl lysine isopeptide (Lys-Gly) (interchain with G-Cter in SUMO2) linkage. A compositionally biased stretch (polar residues) spans 1286 to 1296; the sequence is PSVTCKSSSES. Lys1297 participates in a covalent cross-link: Glycyl lysine isopeptide (Lys-Gly) (interchain with G-Cter in SUMO2). The segment covering 1328–1337 has biased composition (gly residues); it reads GCGVVGGGGS.

As to quaternary structure, interacts (via N-terminus) with NIPBL. Interacts with INTS13; promoting association with the integrator complex. As to expression, isoform 1: Expressed in myoblasts and myotubes. Isoform 2: Expressed in myoblasts and myotubes, with a preference in undifferentiated myoblasts.

The protein localises to the nucleus. Functionally, transcription factor, which activates RAG1, and possibly RAG2, transcription. Through the regulation of RAG1/2 expression, may regulate thymocyte maturation. Along with NIPBL and the multiprotein complex Integrator, promotes cortical neuron migration during brain development by regulating the transcription of crucial genes in this process. Preferentially binds promoters containing paused RNA polymerase II. Up-regulates the expression of SEMA3A, NRP1, PLXND1 and GABBR2 genes, among others. Its function is as follows. Involved in the regulation of myoblast proliferation during myogenesis. In Homo sapiens (Human), this protein is Zinc finger protein 609.